The primary structure comprises 268 residues: Testis-specific serine/threonine-protein kinase 3 (268 aa).

A Protein kinase domain is found at Tyr-10–Leu-265. Residues Ile-16–Val-24 and Lys-39 contribute to the ATP site. The active-site Proton acceptor is the Asp-134. Ser-166 is subject to Phosphoserine. Thr-168 is modified (phosphothreonine).

This sequence belongs to the protein kinase superfamily. CAMK Ser/Thr protein kinase family. Mg(2+) serves as cofactor. It depends on Mn(2+) as a cofactor. Post-translationally, autophosphorylated at Ser-166. Phosphorylation at Thr-168 by PDPK1 activates the serine/threonine protein kinase activity.

It localises to the cell projection. The protein resides in the cilium. It is found in the flagellum. The catalysed reaction is L-seryl-[protein] + ATP = O-phospho-L-seryl-[protein] + ADP + H(+). It catalyses the reaction L-threonyl-[protein] + ATP = O-phospho-L-threonyl-[protein] + ADP + H(+). With respect to regulation, activated by phosphorylation on Thr-168 by PDPK1. Its function is as follows. Serine/threonine protein kinase required for spermatid development and male fertility. In Homo sapiens (Human), this protein is Testis-specific serine/threonine-protein kinase 3.